The chain runs to 118 residues: SPbeta prophage-derived uncharacterized protein YomS (118 aa).

The chain is SPbeta prophage-derived uncharacterized protein YomS (yomS) from Bacillus subtilis (strain 168).